We begin with the raw amino-acid sequence, 142 residues long: uncharacterized protein (142 aa).

The N-terminal stretch at 1-26 (MITEFIKSFLLFFFLPFFLSMPMIFA) is a signal peptide.

This is an uncharacterized protein from Schizosaccharomyces pombe (strain 972 / ATCC 24843) (Fission yeast).